A 390-amino-acid polypeptide reads, in one-letter code: MTQPLSQDQHDSSSNMPTDNAETQGYLSVADYDYDLPDEYIARYPLAERSASRLMYLPAQKENTAVIQDRQFSDLPELLQAGDLIVFNDTKVMKARLFGQKDTGGKVEVLVERLTDDTEFTTDESGQSFDNVALCHVRASKAPKLGQRLVLGDGNIECVMIGRHENLFILSFKNPILPDLEQYGELPIPPYFERHADETDNVRYQTVFHDPTKLASVAAPTASLHFDDKVLKQLADKGINTAYVTLHVGAGTFAPVKTDNLLNHTMHSEYANLPQATADLINQTHQNGNKVIAIGTTVTRVLETAYQKTADEHGHISTWSGDTDIFIYPGFKFGVIDKLLTNFHLPKSTLLMLVSAFAGKANIEQAYEHAVAQKYRFFSYGDAMLLERNL.

The segment at 1-22 (MTQPLSQDQHDSSSNMPTDNAE) is disordered.

It belongs to the QueA family. In terms of assembly, monomer.

It is found in the cytoplasm. The catalysed reaction is 7-aminomethyl-7-carbaguanosine(34) in tRNA + S-adenosyl-L-methionine = epoxyqueuosine(34) in tRNA + adenine + L-methionine + 2 H(+). The protein operates within tRNA modification; tRNA-queuosine biosynthesis. In terms of biological role, transfers and isomerizes the ribose moiety from AdoMet to the 7-aminomethyl group of 7-deazaguanine (preQ1-tRNA) to give epoxyqueuosine (oQ-tRNA). The protein is S-adenosylmethionine:tRNA ribosyltransferase-isomerase of Psychrobacter sp. (strain PRwf-1).